The chain runs to 450 residues: Tubulin alpha-5 chain (450 aa).

Gln-11, Glu-71, Gly-144, Thr-145, Thr-179, Asn-206, and Asn-228 together coordinate GTP. Glu-71 is a binding site for Mg(2+). Glu-254 is an active-site residue. Phosphothreonine is present on Thr-349. Residues 429–450 are disordered; sequence EKDYEEVGAEGGDDEEDEGEDY. Acidic residues predominate over residues 431–450; the sequence is DYEEVGAEGGDDEEDEGEDY.

It belongs to the tubulin family. As to quaternary structure, dimer of alpha and beta chains. A typical microtubule is a hollow water-filled tube with an outer diameter of 25 nm and an inner diameter of 15 nM. Alpha-beta heterodimers associate head-to-tail to form protofilaments running lengthwise along the microtubule wall with the beta-tubulin subunit facing the microtubule plus end conferring a structural polarity. Microtubules usually have 13 protofilaments but different protofilament numbers can be found in some organisms and specialized cells. Requires Mg(2+) as cofactor. In terms of processing, undergoes a tyrosination/detyrosination cycle, the cyclic removal and re-addition of a C-terminal tyrosine residue by the enzymes tubulin tyrosine carboxypeptidase (TTCP) and tubulin tyrosine ligase (TTL), respectively.

It localises to the cytoplasm. The protein resides in the cytoskeleton. The catalysed reaction is GTP + H2O = GDP + phosphate + H(+). In terms of biological role, tubulin is the major constituent of microtubules, a cylinder consisting of laterally associated linear protofilaments composed of alpha- and beta-tubulin heterodimers. Microtubules grow by the addition of GTP-tubulin dimers to the microtubule end, where a stabilizing cap forms. Below the cap, tubulin dimers are in GDP-bound state, owing to GTPase activity of alpha-tubulin. This Arabidopsis thaliana (Mouse-ear cress) protein is Tubulin alpha-5 chain (TUBA5).